The primary structure comprises 230 residues: Orotidine 5'-phosphate decarboxylase (230 aa).

Residues Asp-10, Lys-32, 59 to 68, Thr-116, Arg-177, Gln-186, Gly-206, and Arg-207 each bind substrate; that span reads DLKFHDIPRT. Catalysis depends on Lys-61, which acts as the Proton donor.

Belongs to the OMP decarboxylase family. Type 1 subfamily. In terms of assembly, homodimer.

It carries out the reaction orotidine 5'-phosphate + H(+) = UMP + CO2. The protein operates within pyrimidine metabolism; UMP biosynthesis via de novo pathway; UMP from orotate: step 2/2. Catalyzes the decarboxylation of orotidine 5'-monophosphate (OMP) to uridine 5'-monophosphate (UMP). The polypeptide is Orotidine 5'-phosphate decarboxylase (Methylacidiphilum infernorum (isolate V4) (Methylokorus infernorum (strain V4))).